A 283-amino-acid polypeptide reads, in one-letter code: GTPase Era (283 aa).

Residues 7–175 form the Era-type G domain; the sequence is YCGHVIIVGK…KNIIKSYLPE (169 aa). The G1 stretch occupies residues 15–22; the sequence is GKANVGKS. 15 to 22 serves as a coordination point for GTP; the sequence is GKANVGKS. Positions 41-45 are G2; sequence NTTQS. The interval 62-65 is G3; that stretch reads DTPG. GTP is bound by residues 62–66 and 124–127; these read DTPGV and NKID. The interval 124–127 is G4; the sequence is NKID. Residues 154 to 156 are G5; the sequence is ISA. The KH type-2 domain occupies 198 to 283; sequence IREQLILFLG…HLVLWVKDKN (86 aa).

The protein belongs to the TRAFAC class TrmE-Era-EngA-EngB-Septin-like GTPase superfamily. Era GTPase family. As to quaternary structure, monomer.

The protein resides in the cytoplasm. It localises to the cell membrane. An essential GTPase that binds both GDP and GTP, with rapid nucleotide exchange. Plays a role in 16S rRNA processing and 30S ribosomal subunit biogenesis and possibly also in cell cycle regulation and energy metabolism. The chain is GTPase Era from Buchnera aphidicola subsp. Acyrthosiphon pisum (strain APS) (Acyrthosiphon pisum symbiotic bacterium).